An 88-amino-acid chain; its full sequence is Small ribosomal subunit protein uS15c (88 aa).

It belongs to the universal ribosomal protein uS15 family. Part of the 30S ribosomal subunit.

It is found in the plastid. It localises to the chloroplast. This is Small ribosomal subunit protein uS15c (rps15) from Barbarea verna (Land cress).